Here is a 209-residue protein sequence, read N- to C-terminus: DNA transformation protein TfoX1 (209 aa).

The protein belongs to the Sxy/TfoX family.

Functionally, required for DNA transformation jointly with TfoY (tfoX2). The protein is DNA transformation protein TfoX1 of Aliivibrio fischeri (strain ATCC 700601 / ES114) (Vibrio fischeri).